Here is a 1003-residue protein sequence, read N- to C-terminus: MVELNNCSNSEETGGVDSLEVRFTDFCKNGLSMGESFVTEATKLFNDSKHLLLSNNSTIGVITQEGVERYWFVFVLYSVKRLSEKEAGNSNNGDKGNAFSLCQILRGAKLNVVDFFKELPQFILKVGPTLSNLYGSDWEKRLEVKELQTNFVHLSLLSKYYKRAYQELFLASGNNEDKPSATSNSAIHLPQYYRFGWLLFLSLRIHVFSRFKDLVTCTNGLVSVLAILMIHVPVRFRNFNIDDSSRFVKKGDKVDLLASLSKIYQTSIDDLRETMDKVNNLITEKLKKKPCLASEFRTENLDNLDTDGLTYFEDLMEESCLSSSVSTLEKDYSDAIQNKGELDERIFVNEEDSLLGSGSLSGGAVNMNGTKRKFDAMASPAKTVTSTLSPYRSPNCANSKMTAATPVSTAMTTARWLRTVIAPLQPKPSAELERFLSSCDRDVTADVIRRAQIILEAIFPSSGPAEHCAAGGSLQSTSLMDNIWAEQRRSEALKLYYRVLQTMCTAESQILNGNNLTSLLTNERFHRCMLACSAELVLATHKTVTMLFPAVLERTGITAFDLSKVIESFIRHEESLPRELRRHLNSLEERLLESMVWEKGSSMYNSLAVAKPSLAAEINRMGLLAEPMPSLDAIAMHINLSSGSLPPLPSLHKNNLAPNGQIGDIRSPKKVCSEYRSVLVERNSFTSPVKDRFLALNNIKSKFPPPALHSAFASPTRPNPGGGGETCAETAINVFFGKIVKLAAVRINGMIERLQLSQQIRETVYCLFQKILSQRTSLFFNRHIDQIILCSFYGVAKISQLNLTFKEIICNYRKQPQCKPQVFRSVFVDWTLARHNVRTGADHVDIITFYNEMFIPSVKPLLVELAPAGNNSEKNDHNDGQGPASPKPSPFPKLPDMSPKKVSAVHNVYVSPLRASKMDALISHSSKSYYACVGESTHAYQSPSKDLDVINNRLNGNRKLRGALNFDVDAGLVSDSIVANSLYLQNGNCRSPVAHVKTEQPES.

Residues 405–607 (TPVSTAMTTA…EKGSSMYNSL (203 aa)) are domain A. The pocket stretch occupies residues 405-860 (TPVSTAMTTA…NEMFIPSVKP (456 aa)). A spacer region spans residues 608–729 (AVAKPSLAAE…PGGGGETCAE (122 aa)). The segment at 730-860 (TAINVFFGKI…NEMFIPSVKP (131 aa)) is domain B. A disordered region spans residues 868-899 (AGNNSEKNDHNDGQGPASPKPSPFPKLPDMSP).

Belongs to the retinoblastoma protein (RB) family. Expressed in roots, stems, leaves and flowers.

It is found in the nucleus. Regulator of biological processes that recruits a histone deacetylase to control gene transcription. Formation of stable complexes with geminiviridae replication-associated proteins may create a cellular environment which favors viral DNA replication. May play a role in the entry into mitosis, negatively regulating the cell proliferation during leaf, stem, and flower development. Critical regulator of the endocycle. In Nicotiana benthamiana, this protein is Retinoblastoma-related protein 1 (RBR1).